The following is a 239-amino-acid chain: Ribonuclease PH (239 aa).

Residues Arg-86 and 124-126 (GTR) contribute to the phosphate site.

The protein belongs to the RNase PH family. Homohexameric ring arranged as a trimer of dimers.

The enzyme catalyses tRNA(n+1) + phosphate = tRNA(n) + a ribonucleoside 5'-diphosphate. In terms of biological role, phosphorolytic 3'-5' exoribonuclease that plays an important role in tRNA 3'-end maturation. Removes nucleotide residues following the 3'-CCA terminus of tRNAs; can also add nucleotides to the ends of RNA molecules by using nucleoside diphosphates as substrates, but this may not be physiologically important. Probably plays a role in initiation of 16S rRNA degradation (leading to ribosome degradation) during starvation. In Allorhizobium ampelinum (strain ATCC BAA-846 / DSM 112012 / S4) (Agrobacterium vitis (strain S4)), this protein is Ribonuclease PH.